A 141-amino-acid polypeptide reads, in one-letter code: Large ribosomal subunit protein uL11 (141 aa).

The protein belongs to the universal ribosomal protein uL11 family. As to quaternary structure, part of the ribosomal stalk of the 50S ribosomal subunit. Interacts with L10 and the large rRNA to form the base of the stalk. L10 forms an elongated spine to which L12 dimers bind in a sequential fashion forming a multimeric L10(L12)X complex. Post-translationally, one or more lysine residues are methylated.

In terms of biological role, forms part of the ribosomal stalk which helps the ribosome interact with GTP-bound translation factors. This is Large ribosomal subunit protein uL11 from Geobacillus sp. (strain WCH70).